The following is a 191-amino-acid chain: MSAIWIAIAVLSALSLVFGGLLGYASRRFAVEEDPIVEQIDAILPQSQCGQCGYPGCRPYADAVGNNGEMINKCAPGGEQTMLKLAALLNVEPQPLGAEEAREPERKVAWIDEANCIGCTKCIQACPVDAIVGATRAMHTVLSDICTGCDLCVAPCPTDCIEMRPVATTTANWKWDLHTIPVRVITVESHA.

The interval 1 to 26 (MSAIWIAIAVLSALSLVFGGLLGYAS) is hydrophobic. In terms of domain architecture, 4Fe-4S spans 32–91 (EEDPIVEQIDAILPQSQCGQCGYPGCRPYADAVGNNGEMINKCAPGGEQTMLKLAALLNV). [4Fe-4S] cluster-binding residues include Cys49, Cys52, Cys57, Cys74, Cys116, Cys119, Cys122, Cys126, Cys146, Cys149, Cys152, and Cys156. 4Fe-4S ferredoxin-type domains lie at 107–136 (KVAWIDEANCIGCTKCIQACPVDAIVGATR) and 137–166 (AMHTVLSDICTGCDLCVAPCPTDCIEMRPV).

The protein belongs to the 4Fe4S bacterial-type ferredoxin family. RnfB subfamily. As to quaternary structure, the complex is composed of six subunits: RnfA, RnfB, RnfC, RnfD, RnfE and RnfG. The cofactor is [4Fe-4S] cluster.

It is found in the cell inner membrane. Functionally, part of a membrane-bound complex that couples electron transfer with translocation of ions across the membrane. The sequence is that of Ion-translocating oxidoreductase complex subunit B from Erwinia tasmaniensis (strain DSM 17950 / CFBP 7177 / CIP 109463 / NCPPB 4357 / Et1/99).